A 692-amino-acid chain; its full sequence is Elongation factor G (692 aa).

Residues asparagine 8–threonine 283 enclose the tr-type G domain. Residues alanine 17–threonine 24, aspartate 81–histidine 85, and asparagine 135–aspartate 138 contribute to the GTP site.

Belongs to the TRAFAC class translation factor GTPase superfamily. Classic translation factor GTPase family. EF-G/EF-2 subfamily.

It is found in the cytoplasm. Catalyzes the GTP-dependent ribosomal translocation step during translation elongation. During this step, the ribosome changes from the pre-translocational (PRE) to the post-translocational (POST) state as the newly formed A-site-bound peptidyl-tRNA and P-site-bound deacylated tRNA move to the P and E sites, respectively. Catalyzes the coordinated movement of the two tRNA molecules, the mRNA and conformational changes in the ribosome. This is Elongation factor G from Helicobacter acinonychis (strain Sheeba).